The primary structure comprises 746 residues: Ferric enterobactin receptor (746 aa).

The N-terminal stretch at 1-25 (MSSRALPAVPFLLLSSCLLANAVHA) is a signal peptide. Positions 39–44 (QTVVAT) match the TonB box motif. A TBDR plug domain is found at 47–174 (EETKQAPGVS…AGGVVNIITK (128 aa)). Disordered stretches follow at residues 82–102 (VNLT…IDIR), 235–254 (GHES…GREG), and 397–424 (QKLD…KNRS). The span at 84-98 (LTGNSSSGQRGNNRQ) shows a compositional bias: polar residues. The TBDR beta-barrel domain maps to 179 to 746 (ETHGNLSVYS…TFYTSLTASF (568 aa)). Positions 402–411 (PSSNTQNTEE) are enriched in polar residues. The short motif at 729–746 (ATYNEPGRTFYTSLTASF) is the TonB C-terminal box element.

This sequence belongs to the TonB-dependent receptor family.

It is found in the cell outer membrane. In terms of biological role, specific receptor for the siderophore ferric enterobactin. The protein is Ferric enterobactin receptor (pfeA) of Pseudomonas aeruginosa (strain ATCC 15692 / DSM 22644 / CIP 104116 / JCM 14847 / LMG 12228 / 1C / PRS 101 / PAO1).